Here is a 287-residue protein sequence, read N- to C-terminus: N-methyltransferase verN (287 aa).

The protein belongs to the methyltransferase superfamily. LaeA methyltransferase family.

The protein operates within mycotoxin biosynthesis. Functionally, N-methyltransferase; part of the gene cluster that mediates the biosynthesis of 11'-deoxyverticillin A, one of the dimeric epipolythiodioxopiperazines (ETPs) from the verticillin family that act as mycotoxins. 11'-deoxyverticillin A is required for normal conidiation. The nonribosomal peptide synthetase verP is speculated to be responsible for condensation of amino acids to form the carbon skeleton of verticillin, whereas the cluster-specific tailoring enzymes are involved in further modifications leading to the production of 11'-deoxyverticillin A. This chain is N-methyltransferase verN, found in Clonostachys rogersoniana.